The following is a 399-amino-acid chain: Phosphoglycerate kinase (399 aa).

Substrate-binding positions include 22 to 24, Arg37, 60 to 63, Arg118, and Arg151; these read DFN and HFGR. ATP-binding positions include Lys201, Glu322, and 352–355; that span reads GGDS.

Belongs to the phosphoglycerate kinase family. Monomer.

The protein localises to the cytoplasm. It catalyses the reaction (2R)-3-phosphoglycerate + ATP = (2R)-3-phospho-glyceroyl phosphate + ADP. The protein operates within carbohydrate degradation; glycolysis; pyruvate from D-glyceraldehyde 3-phosphate: step 2/5. The protein is Phosphoglycerate kinase of Wolbachia sp. subsp. Brugia malayi (strain TRS).